Here is a 658-residue protein sequence, read N- to C-terminus: DNA ligase (658 aa).

NAD(+) is bound by residues 32–36 and 81–82; these read DAVYD and SL. Catalysis depends on K112, which acts as the N6-AMP-lysine intermediate. Residues R133, E167, and K306 each coordinate NAD(+). The Zn(2+) site is built by C400, C403, C416, and C421. A BRCT domain is found at 577–658; the sequence is ESSSVFNNKT…LKRLKKLDQN (82 aa).

It belongs to the NAD-dependent DNA ligase family. LigA subfamily. Mg(2+) is required as a cofactor. It depends on Mn(2+) as a cofactor.

It catalyses the reaction NAD(+) + (deoxyribonucleotide)n-3'-hydroxyl + 5'-phospho-(deoxyribonucleotide)m = (deoxyribonucleotide)n+m + AMP + beta-nicotinamide D-nucleotide.. DNA ligase that catalyzes the formation of phosphodiester linkages between 5'-phosphoryl and 3'-hydroxyl groups in double-stranded DNA using NAD as a coenzyme and as the energy source for the reaction. It is essential for DNA replication and repair of damaged DNA. This chain is DNA ligase, found in Helicobacter pylori (strain G27).